The following is a 1032-amino-acid chain: tRNA wybutosine-synthesizing protein 4 (1032 aa).

S-adenosyl-L-methionine-binding positions include Arg69, Gly95, Asp122, 169–170, and Glu196; that span reads DL. Residues 702–726 form a disordered region; it reads ESVEPNKSQSEKATSKPSAQSQNEP. The segment covering 716-725 has biased composition (polar residues); sequence SKPSAQSQNE. A JmjC domain is found at 833 to 988; the sequence is PTKLPANLAV…AAGRDVYGNR (156 aa).

The protein belongs to the methyltransferase superfamily. LCMT family.

The catalysed reaction is 7-[(3S)-3-amino-3-carboxypropyl]wyosine(37) in tRNA(Phe) + S-adenosyl-L-methionine = 7-[(3S)-(3-amino-3-methoxycarbonyl)propyl]wyosine(37) in tRNA(Phe) + S-adenosyl-L-homocysteine. The enzyme catalyses 7-[(3S)-(3-amino-3-methoxycarbonyl)propyl]wyosine(37) in tRNA(Phe) + S-adenosyl-L-methionine + CO2 = wybutosine(37) in tRNA(Phe) + S-adenosyl-L-homocysteine + 2 H(+). It functions in the pathway tRNA modification; wybutosine-tRNA(Phe) biosynthesis. Probable S-adenosyl-L-methionine-dependent methyltransferase that acts as a component of the wybutosine biosynthesis pathway. Wybutosine is a hyper modified guanosine with a tricyclic base found at the 3'-position adjacent to the anticodon of eukaryotic phenylalanine tRNA. May methylate the carboxyl group of leucine residues to form alpha-leucine ester residues. The protein is tRNA wybutosine-synthesizing protein 4 (ppm2) of Aspergillus oryzae (strain ATCC 42149 / RIB 40) (Yellow koji mold).